The chain runs to 146 residues: MSEQLVVVNAENQILGRMATHIAKLLIQGKRVVVVNAEKAIISGPRARVVRGYSLIFSVRKFQNPEKNTIKRPRTPINIVKRTVRGMLPKNKSGKMMFKNLIVFIGIPAEYKDKQMIRFEDADVKRLKGKYITVGELSKLLGGFSQ.

This sequence belongs to the universal ribosomal protein uL13 family. As to quaternary structure, part of the 50S ribosomal subunit.

This protein is one of the early assembly proteins of the 50S ribosomal subunit, although it is not seen to bind rRNA by itself. It is important during the early stages of 50S assembly. The sequence is that of Large ribosomal subunit protein uL13 from Sulfurisphaera tokodaii (strain DSM 16993 / JCM 10545 / NBRC 100140 / 7) (Sulfolobus tokodaii).